A 702-amino-acid polypeptide reads, in one-letter code: Polyribonucleotide nucleotidyltransferase (702 aa).

Mg(2+) is bound by residues Asp491 and Asp497. A KH domain is found at 558–618 (PKMKTFMIPV…TAIEKAYQLI (61 aa)). Positions 628-696 (GEKIIGPVVK…GKGKIKLQLI (69 aa)) constitute an S1 motif domain.

This sequence belongs to the polyribonucleotide nucleotidyltransferase family. Mg(2+) serves as cofactor.

The protein resides in the cytoplasm. It carries out the reaction RNA(n+1) + phosphate = RNA(n) + a ribonucleoside 5'-diphosphate. Involved in mRNA degradation. Catalyzes the phosphorolysis of single-stranded polyribonucleotides processively in the 3'- to 5'-direction. The chain is Polyribonucleotide nucleotidyltransferase from Spiroplasma citri.